The following is a 1374-amino-acid chain: Serine/threonine-protein kinase LMTK1 (1374 aa).

Residues 32–52 (LAVVAVSFSGLFAVIVLMLAC) form a helical membrane-spanning segment. Positions 125–395 (LLYLKEIGRG…PTAEEVHLLL (271 aa)) constitute a Protein kinase domain. ATP-binding positions include 131-139 (IGRGWFGKV) and lysine 156. Aspartate 253 acts as the Proton acceptor in catalysis. Serine 495 is modified (phosphoserine). Disordered stretches follow at residues 542–622 (GHDP…LAEG), 667–731 (VGAR…LLGL), 765–1195 (WTET…PAVP), 1245–1302 (QESP…AWDD), and 1320–1374 (AAPA…SKEA). Low complexity predominate over residues 606-620 (PSRSPSPSAGPLSLA). Residues 680 to 690 (SNVSANNNSGS) are compositionally biased toward polar residues. Low complexity-rich tracts occupy residues 719–731 (PEPG…LLGL), 801–831 (SPSQ…TPAT), and 847–856 (SSSSPEVEAP). Residues 865–878 (EATSGIFTDTSSDG) are compositionally biased toward polar residues. The segment covering 900–914 (PDSLDSLDIPSSASD) has biased composition (low complexity). A compositionally biased stretch (polar residues) spans 978–987 (RLSTSLSGLN). Serine 1029 carries the phosphoserine modification. Polar residues predominate over residues 1063 to 1073 (EGSSPEPSTCP). Residues 1138 to 1155 (TPRAPLRLALPGLPAALE) show a composition bias toward low complexity. Over residues 1158–1173 (PEEEEEDSEDSDESDE) the composition is skewed to acidic residues. 5 positions are modified to phosphoserine: serine 1168, serine 1171, serine 1184, serine 1187, and serine 1262. Polar residues predominate over residues 1272–1291 (GSPSAPNRPQQADGSPNGST). Pro residues predominate over residues 1321–1332 (APAPAAPTPTPA). Residues 1337 to 1352 (FTVSPAPTSRFSITHV) are compositionally biased toward polar residues. The span at 1353–1363 (SDSDAESKRGP) shows a compositional bias: basic and acidic residues. The span at 1365–1374 (AGAGGESKEA) shows a compositional bias: gly residues.

The protein belongs to the protein kinase superfamily. Tyr protein kinase family. Interacts with CDK5. Autophosphorylated. Phosphorylated by CDK5. In terms of tissue distribution, expressed in brain.

It localises to the membrane. The protein resides in the cytoplasm. It is found in the perinuclear region. It catalyses the reaction L-seryl-[protein] + ATP = O-phospho-L-seryl-[protein] + ADP + H(+). The enzyme catalyses L-threonyl-[protein] + ATP = O-phospho-L-threonyl-[protein] + ADP + H(+). May be involved in neuronal differentiation. The sequence is that of Serine/threonine-protein kinase LMTK1 (AATK) from Homo sapiens (Human).